The chain runs to 128 residues: Translation initiation factor 5A (128 aa).

At lysine 35 the chain carries Hypusine.

The protein belongs to the eIF-5A family.

The protein localises to the cytoplasm. Functionally, functions by promoting the formation of the first peptide bond. In Methanosarcina acetivorans (strain ATCC 35395 / DSM 2834 / JCM 12185 / C2A), this protein is Translation initiation factor 5A (eif5a).